The chain runs to 260 residues: Creatinine amidohydrolase (260 aa).

Mn(2+) is bound at residue E34. Zn(2+) is bound by residues E34, H36, and D45. D45 lines the Mn(2+) pocket. Position 78 (S78) interacts with creatine. H120 provides a ligand contact to Mn(2+). H120 provides a ligand contact to Zn(2+). Y121, W174, D175, and H178 together coordinate creatine. E183 contacts Zn(2+).

This sequence belongs to the creatininase superfamily. Homohexamer; trimer of dimers. The cofactor is Zn(2+). It depends on Mn(2+) as a cofactor.

It carries out the reaction creatinine + H2O = creatine. It functions in the pathway amine and polyamine degradation; creatinine degradation. Is markedly inactivated in vitro by heavy metal ions, N-bromosuccinimide, ethoxyformic anhydride, and dye-sensitized photooxidation. Its function is as follows. Cyclic amidohydrolase that catalyzes the reversible conversion of creatinine to creatine. Is also active toward glycocyamidine, though the reaction rate is very low, but it is completely inert toward hydantoin and its derivatives. The protein is Creatinine amidohydrolase (crnA) of Pseudomonas putida (Arthrobacter siderocapsulatus).